The primary structure comprises 77 residues: Large ribosomal subunit protein bL28 (77 aa).

A disordered region spans residues 1–20 (MSRVCQVTGKGPVTGNNISH).

It belongs to the bacterial ribosomal protein bL28 family.

The sequence is that of Large ribosomal subunit protein bL28 from Pseudomonas fluorescens (strain Pf0-1).